An 88-amino-acid polypeptide reads, in one-letter code: ATP synthase subunit 9, mitochondrial (88 aa).

Helical transmembrane passes span Ile8–Phe28 and Leu45–Phe72.

This sequence belongs to the ATPase C chain family. F-type ATPases have 2 components, CF(1) - the catalytic core - and CF(0) - the membrane proton channel. CF(1) has five subunits: alpha(3), beta(3), gamma(1), delta(1), epsilon(1). CF(0) has three main subunits: a, b and c.

Its subcellular location is the mitochondrion membrane. The catalysed reaction is ATP + H2O + 4 H(+)(in) = ADP + phosphate + 5 H(+)(out). In terms of biological role, this protein is one of the chains of the nonenzymatic membrane component (F0) of mitochondrial ATPase. This Beta vulgaris (Sugar beet) protein is ATP synthase subunit 9, mitochondrial (ATP9).